The primary structure comprises 386 residues: N-terminal EF-hand calcium-binding protein 2 (386 aa).

An Omega-N-methylarginine modification is found at arginine 10. Arginine 42 is subject to Asymmetric dimethylarginine. EF-hand domains lie at 60–95 and 96–129; these read GGTA…GVLN and EKEL…HMGD. Residues aspartate 73, asparagine 75, aspartate 77, lysine 79, glutamate 84, aspartate 107, aspartate 109, threonine 111, histidine 113, and glutamate 118 each contribute to the Ca(2+) site. Residues 170–201 are a coiled coil; that stretch reads LKETANQIQSLLSSVESAVEAIEEQTSQLRQN. In terms of domain architecture, ABM spans 286–375; sequence QLVRQEMAVC…SQPEALSRIL (90 aa).

In terms of assembly, interacts (calcium-dependent) with ADORA2A and GRM5. In terms of tissue distribution, expressed in brain. Expressed in the spinal dorsal horn with especially strong expression in lamina IIi; found in excitory synaptic boutons and in ependymal cells (at protein level).

Its subcellular location is the cytoplasm. It is found in the cell projection. The protein localises to the dendrite. The protein resides in the axon. It localises to the cell membrane. In terms of biological role, may act as a signaling scaffold protein that senses intracellular calcium. Can modulate ligand-induced internalization of ADORA2A and coupling efficiency of mGluR5/GRM5; for both receptors may regulate signaling activity such as promoting MAPK1/3 (ERK1/2) activation. The sequence is that of N-terminal EF-hand calcium-binding protein 2 (NECAB2) from Homo sapiens (Human).